We begin with the raw amino-acid sequence, 176 residues long: Large ribosomal subunit protein bL17 (176 aa).

Positions 124 to 176 are disordered; it reads AAPKAARQDRSKRVKGSRKTEASAAKAAPAAQAAPELPAESDAPAAEAAPTEE. Over residues 145 to 176 the composition is skewed to low complexity; that stretch reads ASAAKAAPAAQAAPELPAESDAPAAEAAPTEE.

Belongs to the bacterial ribosomal protein bL17 family. As to quaternary structure, part of the 50S ribosomal subunit. Contacts protein L32.

The protein is Large ribosomal subunit protein bL17 of Chlorobium phaeovibrioides (strain DSM 265 / 1930) (Prosthecochloris vibrioformis (strain DSM 265)).